The following is a 647-amino-acid chain: Versicolorin B synthase (647 aa).

The signal sequence occupies residues 1–26 (MALSTILTAAAMPVAGLFAFAQQSSA). FAD is bound by residues 85 to 86 (TA) and 106 to 107 (EA). The N-linked (GlcNAc...) asparagine glycan is linked to asparagine 117. Residue 172–175 (GAML) participates in FAD binding. N-linked (GlcNAc...) asparagine glycans are attached at residues asparagine 222 and asparagine 509. FAD-binding positions include alanine 617 and 628–629 (PM).

The protein belongs to the GMC oxidoreductase family. As to quaternary structure, homodimer. It depends on FAD as a cofactor.

The protein resides in the cytoplasm. The protein localises to the cytosol. It catalyses the reaction (2S-3S)-versiconal hemiacetal = versicolorin B + H2O. It carries out the reaction (S)-5'-oxoaverantin + H(+) = (1'S,5'S)-averufin + H2O. The protein operates within mycotoxin biosynthesis. Versicolorin B synthase; part of the fragmented gene cluster that mediates the biosynthesis of dothistromin (DOTH), a polyketide toxin very similar in structure to the aflatoxin precursor, versicolorin B. The first step of the pathway is the conversion of acetate to norsolorinic acid (NOR) and requires the fatty acid synthase subunits hexA and hexB, as well as the polyketide synthase pksA. PksA combines a hexanoyl starter unit and 7 malonyl-CoA extender units to synthesize the precursor NOR. The hexanoyl starter unit is provided to the acyl-carrier protein (ACP) domain by the fungal fatty acid synthase hexA/hexB. The second step is the conversion of NOR to averantin (AVN) and requires the norsolorinic acid ketoreductase nor1, which catalyzes the dehydration of norsolorinic acid to form (1'S)-averantin. The cytochrome P450 monooxygenase avnA then catalyzes the hydroxylation of AVN to 5'hydroxyaverantin (HAVN). The next step is performed by adhA that transforms HAVN to averufin (AVF). Averufin might then be converted to hydroxyversicolorone by cypX and avfA. Hydroxyversicolorone is further converted versiconal hemiacetal acetate (VHA) by moxY. VHA is then the substrate for the versiconal hemiacetal acetate esterase est1 to yield versiconal (VAL). Versicolorin B synthase vbsA then converts VAL to versicolorin B (VERB) by closing the bisfuran ring. Then, the activity of the versicolorin B desaturase verB leads to versicolorin A (VERA). DotB, a predicted chloroperoxidase, may perform epoxidation of the A-ring of VERA. Alternatively, a cytochrome P450, such as cypX or avnA could catalyze this step. It is also possible that another, uncharacterized, cytochrome P450 enzyme is responsible for this step. Opening of the epoxide could potentially be achieved by the epoxide hydrolase epoA. However, epoA seems not to be required for DOTH biosynthesis, but other epoxide hydrolases may have the ability to complement this hydrolysis. Alternatively, opening of the epoxide ring could be achieved non-enzymatically. The next step is the deoxygenation of ring A to yield the 5,8-dihydroxyanthraquinone which is most likely catalyzed by the NADPH dehydrogenase encoded by ver1. The last stages of DOTH biosynthesis are proposed to involve hydroxylation of the bisfuran. OrdB and norB might have oxidative roles here. An alternative possibility is that cytochrome P450 monoogenases such as avnA and cypX might perform these steps in addition to previously proposed steps. The protein is Versicolorin B synthase of Dothistroma septosporum (Red band needle blight fungus).